The sequence spans 330 residues: Formylaminopyrimidine-binding protein (330 aa).

Residues 1–18 form the signal peptide; the sequence is MKSFKIISLLLAILFLAS. The N-palmitoyl cysteine moiety is linked to residue Cys-19. Cys-19 is lipidated: S-diacylglycerol cysteine. Substrate is bound by residues 38–39, Tyr-90, Asn-145, Tyr-188, and Glu-192; that span reads DW.

This sequence belongs to the NMT1 family. The complex is likely composed of an ATP-binding protein (ThiZ), a transmembrane protein (ThiX) and a solute-binding protein (ThiY).

The protein localises to the cell membrane. It participates in cofactor biosynthesis; thiamine diphosphate biosynthesis. In terms of biological role, participates in a thiamine pyrimidine salvage pathway as part of the ABC transporter complex ThiXYZ involved in the import of thiamine degradation products. Binds the formylaminopyrimidine N-formyl-4-amino-5-aminomethyl-2-methylpyrimidine (FAMP). Does not bind thiamine. In Halalkalibacterium halodurans (strain ATCC BAA-125 / DSM 18197 / FERM 7344 / JCM 9153 / C-125) (Bacillus halodurans), this protein is Formylaminopyrimidine-binding protein.